Consider the following 444-residue polypeptide: Aspartate--tRNA(Asp/Asn) ligase (444 aa).

Glu-176 is an L-aspartate binding site. The segment at 198–201 is aspartate; the sequence is QLFK. Position 220 (Arg-220) interacts with L-aspartate. Residues 220 to 222, 228 to 230, and Glu-367 contribute to the ATP site; these read RAE and RHL. Mg(2+) is bound by residues Glu-367 and Ser-370. Positions 370 and 374 each coordinate L-aspartate. 415-418 provides a ligand contact to ATP; it reads GCER.

This sequence belongs to the class-II aminoacyl-tRNA synthetase family. Type 2 subfamily. As to quaternary structure, homodimer. It depends on Mg(2+) as a cofactor.

It is found in the cytoplasm. It carries out the reaction tRNA(Asx) + L-aspartate + ATP = L-aspartyl-tRNA(Asx) + AMP + diphosphate. Aspartyl-tRNA synthetase with relaxed tRNA specificity since it is able to aspartylate not only its cognate tRNA(Asp) but also tRNA(Asn). Reaction proceeds in two steps: L-aspartate is first activated by ATP to form Asp-AMP and then transferred to the acceptor end of tRNA(Asp/Asn). The polypeptide is Aspartate--tRNA(Asp/Asn) ligase (Methanosarcina barkeri (strain Fusaro / DSM 804)).